A 1287-amino-acid chain; its full sequence is DNA-directed RNA polymerase subunit beta (1287 aa).

It belongs to the RNA polymerase beta chain family. As to quaternary structure, the RNAP catalytic core consists of 2 alpha, 1 beta, 1 beta' and 1 omega subunit. When a sigma factor is associated with the core the holoenzyme is formed, which can initiate transcription.

It catalyses the reaction RNA(n) + a ribonucleoside 5'-triphosphate = RNA(n+1) + diphosphate. DNA-dependent RNA polymerase catalyzes the transcription of DNA into RNA using the four ribonucleoside triphosphates as substrates. The chain is DNA-directed RNA polymerase subunit beta from Salinibacter ruber (strain DSM 13855 / M31).